Reading from the N-terminus, the 419-residue chain is Serine--tRNA ligase (419 aa).

L-serine is bound at residue 226 to 228 (TSE). Residues 257 to 259 (RRE) and valine 273 contribute to the ATP site. Glutamate 280 provides a ligand contact to L-serine. Position 344 to 347 (344 to 347 (ELTS)) interacts with ATP. Threonine 379 contacts L-serine.

The protein belongs to the class-II aminoacyl-tRNA synthetase family. Type-1 seryl-tRNA synthetase subfamily. In terms of assembly, homodimer. The tRNA molecule binds across the dimer.

It is found in the cytoplasm. It carries out the reaction tRNA(Ser) + L-serine + ATP = L-seryl-tRNA(Ser) + AMP + diphosphate + H(+). The catalysed reaction is tRNA(Sec) + L-serine + ATP = L-seryl-tRNA(Sec) + AMP + diphosphate + H(+). It functions in the pathway aminoacyl-tRNA biosynthesis; selenocysteinyl-tRNA(Sec) biosynthesis; L-seryl-tRNA(Sec) from L-serine and tRNA(Sec): step 1/1. Catalyzes the attachment of serine to tRNA(Ser). Is also able to aminoacylate tRNA(Sec) with serine, to form the misacylated tRNA L-seryl-tRNA(Sec), which will be further converted into selenocysteinyl-tRNA(Sec). In Corynebacterium diphtheriae (strain ATCC 700971 / NCTC 13129 / Biotype gravis), this protein is Serine--tRNA ligase.